A 595-amino-acid polypeptide reads, in one-letter code: UvrABC system protein C (595 aa).

One can recognise a GIY-YIG domain in the interval 17–94; sequence FEPGCYLMKD…IKQYQPRYNI (78 aa). The UVR domain maps to 199-234; the sequence is KTIIKNLESRMQAASENLEFEQAKEYRDLIQNIHNL.

It belongs to the UvrC family. In terms of assembly, interacts with UvrB in an incision complex.

It localises to the cytoplasm. Functionally, the UvrABC repair system catalyzes the recognition and processing of DNA lesions. UvrC both incises the 5' and 3' sides of the lesion. The N-terminal half is responsible for the 3' incision and the C-terminal half is responsible for the 5' incision. The polypeptide is UvrABC system protein C (Staphylococcus carnosus (strain TM300)).